Consider the following 508-residue polypeptide: MGLPWYRVHTVVLNDPGRLLSVHIMHTALVAGWAGSMALYELAVFDPSDPVLDPMWRQGMFVIPFMTRLGITNSWGGWNITGGTITNPGIWSYEGVAGAHIVFSGLCFLAAIWHWVYWDLEIFCDERTGKPSLDLPKIFGIHLFLAGVACFGFGAFHVTGLYGPGIWVSDPYGLTGRIQSVNPAWGVEGFDPFVPGGVASHHIAAGTLGILAGLFHLSVRPPQRLYKGLRMGNIETVLSSSIAAVFFAAFVVAGTMWYGSATTPIELFGPTRYQWDQGYFQQEIYRRVGAGLAENQSLSEAWSKIPEKLAFYDYIGNNPAKGGLFRAGSMDNGDGIAVGWLGHPVFRDKEGHELFVRRMPTFFETFPVVLVDGDGIVRADVPFRRAESKYSVEQVGVIVEFYGGELNGVSYSDPATVKKYARRAQLGEIFELDRATLKSDGVFRSSPRGWFTFGHASFALLFFFGHIWHGARTLFRDVFAGIDPDLDAQVEFGAFQKLGDPTTKKQVV.

A run of 6 helical transmembrane segments spans residues 21 to 36, 101 to 115, 140 to 156, 203 to 218, 237 to 252, and 457 to 472; these read SVHIMHTALVAGWAGS, IVFSGLCFLAAIWHW, GIHLFLAGVACFGFGAF, IAAGTLGILAGLFHLS, VLSSSIAAVFFAAFVV, and SFALLFFFGHIWHGAR.

It belongs to the PsbB/PsbC family. PsbB subfamily. PSII is composed of 1 copy each of membrane proteins PsbA, PsbB, PsbC, PsbD, PsbE, PsbF, PsbH, PsbI, PsbJ, PsbK, PsbL, PsbM, PsbT, PsbX, PsbY, PsbZ, Psb30/Ycf12, at least 3 peripheral proteins of the oxygen-evolving complex and a large number of cofactors. It forms dimeric complexes. The cofactor is Binds multiple chlorophylls. PSII binds additional chlorophylls, carotenoids and specific lipids..

The protein localises to the plastid. The protein resides in the chloroplast thylakoid membrane. One of the components of the core complex of photosystem II (PSII). It binds chlorophyll and helps catalyze the primary light-induced photochemical processes of PSII. PSII is a light-driven water:plastoquinone oxidoreductase, using light energy to abstract electrons from H(2)O, generating O(2) and a proton gradient subsequently used for ATP formation. This Glycine max (Soybean) protein is Photosystem II CP47 reaction center protein.